Consider the following 445-residue polypeptide: Aminopeptidase S (445 aa).

Residues 1–45 form the signal peptide; sequence MRPNRFSLRRSPTAVAAVALAAVLAAGAPAAQAAGAAAPTAAAAA. The Ca(2+) site is built by Asp-48 and Ile-49. Residues His-130 and Asp-142 each contribute to the Zn(2+) site. The active-site Proton acceptor is the Glu-176. Positions 177, 205, and 292 each coordinate Zn(2+). Cys-290 and Cys-295 form a disulfide bridge. Ca(2+)-binding residues include Asp-307 and Asp-311. The P/Homo B domain maps to 325–445; that stretch reads GEPPTGEGVF…GYIDSWKLTF (121 aa). The propeptide at 330–445 is removed in mature form; sequence GEGVFSNTTD…GYIDSWKLTF (116 aa).

The protein belongs to the peptidase M28 family. M28A subfamily. Monomer. Ca(2+) is required as a cofactor. Requires Zn(2+) as cofactor. Mn(2+) serves as cofactor. The cofactor is Co(2+).

The protein resides in the secreted. It carries out the reaction Release of an N-terminal amino acid with a preference for large hydrophobic amino-terminus residues.. With respect to regulation, calcium activates the enzyme, inhibited by 1,10-phenanthroline, EDTA and EGTA. End-product inhibited by L-amino acids. Non-competitively inhibited by NaF and NaH(2)PO(4). Functionally, an exopeptidase specific for larger hydrophobic amino acids (especially leucine), no cleavage occurs if the next residue is proline. The polypeptide is Aminopeptidase S (Streptomyces griseus subsp. griseus (strain JCM 4626 / CBS 651.72 / NBRC 13350 / KCC S-0626 / ISP 5235)).